We begin with the raw amino-acid sequence, 92 residues long: Transcription factor PRE1 (92 aa).

The bHLH domain maps to 4-59 (RRSRQSSSAPRISDNQMIDLVSKLRQILPEIGQRRRSDKASASKVLQETCNYIRNL).

Interacts with IBH1 and HFR1. Expressed in roots, leaves, stems and flowers.

The protein resides in the nucleus. Atypical and probable non DNA-binding bHLH transcription factor that integrates multiple signaling pathways to regulate cell elongation and plant development. Binds IBH1, forming a pair of antagonistic bHLH transcription factors that function downstream of BZR1 to mediate brassinosteroid regulation of cell elongation. Regulates light responses by binding and inhibiting the activity of the bHLH transcription factor HFR1, a critical regulator of light signaling and shade avoidance. May have a regulatory role in various aspects of gibberellin-dependent growth and development. This chain is Transcription factor PRE1 (PRE1), found in Arabidopsis thaliana (Mouse-ear cress).